A 431-amino-acid chain; its full sequence is Levansucrase LscC (431 aa).

Sucrose is bound by residues W61, D62, A148, R218, and D219. D62 functions as the Nucleophile in the catalytic mechanism. The Proton donor/acceptor role is filled by E303.

It belongs to the glycosyl hydrolase 68 family.

The protein localises to the periplasm. The catalysed reaction is [6)-beta-D-fructofuranosyl-(2-&gt;](n) alpha-D-glucopyranoside + sucrose = [6)-beta-D-fructofuranosyl-(2-&gt;](n+1) alpha-D-glucopyranoside + D-glucose. Its function is as follows. Catalyzes the synthesis of levan, a fructose polymer, by transferring the fructosyl moiety from sucrose to a growing acceptor molecule. The chain is Levansucrase LscC from Pseudomonas savastanoi pv. glycinea (Pseudomonas syringae pv. glycinea).